The following is a 758-amino-acid chain: Xaa-Pro dipeptidyl-peptidase (758 aa).

Catalysis depends on charge relay system residues Ser349, Asp469, and His499.

The protein belongs to the peptidase S15 family. Homodimer.

Its subcellular location is the cytoplasm. The enzyme catalyses Hydrolyzes Xaa-Pro-|- bonds to release unblocked, N-terminal dipeptides from substrates including Ala-Pro-|-p-nitroanilide and (sequentially) Tyr-Pro-|-Phe-Pro-|-Gly-Pro-|-Ile.. Its function is as follows. Removes N-terminal dipeptides sequentially from polypeptides having unsubstituted N-termini provided that the penultimate residue is proline. The chain is Xaa-Pro dipeptidyl-peptidase from Streptococcus uberis (strain ATCC BAA-854 / 0140J).